Reading from the N-terminus, the 319-residue chain is MKTETPSVKIVAITADEAGQRIDNFLRTQLKGVPKSMIYRILRKGEVRVNKKRIKPEYKLEAGDEVRIPPVRVAEREEEAVSPHLQKVAALADVILYEDDHILVLNKPSGTAVHGGSGLSFGVIEGLRALRPEARFLELVHRLDRDTSGVLLVAKKRSALRSLHEQLREKGMQKDYLALVRGQWQSHVKSVQAPLLKNILQSGERIVRVSQEGKPSETRFKVEERYAFATLVRCSPVTGRTHQIRVHTQYAGHPIAFDDRYGDREFDRQLTEAGTGLNRLFLHAAALKFTHPGTGEVMRIEAPMDDGLKRCLQKLRNAR.

Residues 20–83 (QRIDNFLRTQ…AEREEEAVSP (64 aa)) form the S4 RNA-binding domain. The active site involves D144.

The protein belongs to the pseudouridine synthase RluA family.

It catalyses the reaction uridine(955/2504/2580) in 23S rRNA = pseudouridine(955/2504/2580) in 23S rRNA. Responsible for synthesis of pseudouridine from uracil at positions 955, 2504 and 2580 in 23S ribosomal RNA. The sequence is that of Ribosomal large subunit pseudouridine synthase C (rluC) from Escherichia coli O157:H7.